The following is a 382-amino-acid chain: GDP-mannose 4,6 dehydratase 2 (382 aa).

NADP(+) is bound by residues 40–45 (GITGQD), 97–98 (DM), 119–123 (LAAQS), and Tyr-134. Thr-166 is an active-site residue. Residues Glu-168 and Tyr-190 each act as nucleophile in the active site. NADP(+)-binding residues include Lys-194, His-220, and Arg-225.

The protein belongs to the NAD(P)-dependent epimerase/dehydratase family. GDP-mannose 4,6-dehydratase subfamily. It depends on NADP(+) as a cofactor.

The enzyme catalyses GDP-alpha-D-mannose = GDP-4-dehydro-alpha-D-rhamnose + H2O. It participates in nucleotide-sugar biosynthesis; GDP-L-fucose biosynthesis via de novo pathway; GDP-L-fucose from GDP-alpha-D-mannose: step 1/2. Catalyzes the conversion of GDP-D-mannose to GDP-4-dehydro-6-deoxy-D-mannose. The protein is GDP-mannose 4,6 dehydratase 2 (gmd-2) of Caenorhabditis elegans.